Here is a 30-residue protein sequence, read N- to C-terminus: Cysteine-rich venom protein mossambin (30 aa).

A disordered region spans residues Asn1 to Asn30.

Belongs to the CRISP family. Contains 8 disulfide bonds. As to expression, expressed by the venom gland.

The protein localises to the secreted. Inhibits calcium-activated potassium channels (KCa), voltage-gated potassium channel (Kv), and the calcium release channel/ryanodine receptor (RyR). The protein is Cysteine-rich venom protein mossambin of Naja mossambica (Mozambique spitting cobra).